Consider the following 162-residue polypeptide: MTTATQLLKSFTLWEFLKAHALTLKYFFKPKATINYPFEKNPLSPRFRGEHALRRYPNGEERCIACKLCEAVCPAQAITIESEPRDDGSRRTTRYDIDMTKCIYCGFCQEACPVDAIVEGPNFEYSTETREELLYDKAKLLANGDKWERAIAANLEADAPYR.

4Fe-4S ferredoxin-type domains lie at 53 to 83 and 93 to 122; these read LRRY…IESE and TRYD…EGPN. [4Fe-4S] cluster is bound by residues cysteine 63, cysteine 66, cysteine 69, cysteine 73, cysteine 102, cysteine 105, cysteine 108, and cysteine 112.

The protein belongs to the complex I 23 kDa subunit family. NDH-1 is composed of 14 different subunits. Subunits NuoA, H, J, K, L, M, N constitute the membrane sector of the complex. The cofactor is [4Fe-4S] cluster.

The protein resides in the cell inner membrane. The enzyme catalyses a quinone + NADH + 5 H(+)(in) = a quinol + NAD(+) + 4 H(+)(out). In terms of biological role, NDH-1 shuttles electrons from NADH, via FMN and iron-sulfur (Fe-S) centers, to quinones in the respiratory chain. The immediate electron acceptor for the enzyme in this species is believed to be ubiquinone. Couples the redox reaction to proton translocation (for every two electrons transferred, four hydrogen ions are translocated across the cytoplasmic membrane), and thus conserves the redox energy in a proton gradient. The protein is NADH-quinone oxidoreductase subunit I of Erythrobacter litoralis (strain HTCC2594).